Consider the following 392-residue polypeptide: MTQLYPQYKKQLTTKIVLFSALSLLMMASLPNTYAEQYPDVPVPFKNGTGGKVENSLYVGLGSAGVSWFRLDTDKTGAGWQKVANFPGQPREQAVTVVLAGKLYVFGGVGKTNANDTQVRALDDAYRFDPQTNQWQQLATRAPRGLVGTVATTLDGSQAVLLGGVNKAIFDGYFTDLASAGSDEVRKSAVINAYFNQAPADYFYNRDVLIYDPQKNQWKSGGLLPFLGTAGSAISRMDNRLILINGEIKPGLRTAAVWQGLMQGNVLEWQPQPDLIGAETGSAQEGLAGAFSGISHKTVLVAGGANFPGAWKQFNRGHLYAHQGLEKQWHQQVYALVDNQWRIAGKLPQPLGYGVSIQGPDKVILIGGETTGGTATSAVTQLSWQGGKLHIE.

An N-terminal signal peptide occupies residues 1–35 (MTQLYPQYKKQLTTKIVLFSALSLLMMASLPNTYA). 7 Kelch repeats span residues 56 to 100 (SLYV…VVLA), 102 to 155 (KLYV…TTLD), 157 to 192 (SQAV…AVIN), 193 to 238 (AYFN…SRMD), 241 to 290 (LILI…LAGA), 312 to 361 (KQFN…QGPD), and 363 to 392 (VILI…LHIE). Residue E247 is the Proton acceptor of the active site.

Belongs to the NanM family. As to quaternary structure, homodimer.

It is found in the periplasm. It carries out the reaction N-acetyl-alpha-neuraminate = N-acetyl-beta-neuraminate. Its function is as follows. Converts alpha-N-acetylneuranimic acid (Neu5Ac) to the beta-anomer, accelerating the equilibrium between the alpha- and beta-anomers. Probably facilitates sialidase-negative bacteria to compete successfully for limited amounts of extracellular Neu5Ac, which is likely taken up in the beta-anomer. In addition, the rapid removal of sialic acid from solution might be advantageous to the bacterium to damp down host responses. In Yersinia pseudotuberculosis serotype O:1b (strain IP 31758), this protein is N-acetylneuraminate epimerase.